The sequence spans 339 residues: UDP-N-acetylenolpyruvoylglucosamine reductase (339 aa).

Residues 19–189 form the FAD-binding PCMH-type domain; sequence VDVQARLFAE…LRVRFKLSRV (171 aa). Residue Arg-166 is part of the active site. Ser-239 serves as the catalytic Proton donor. Glu-335 is an active-site residue.

Belongs to the MurB family. Requires FAD as cofactor.

It is found in the cytoplasm. It carries out the reaction UDP-N-acetyl-alpha-D-muramate + NADP(+) = UDP-N-acetyl-3-O-(1-carboxyvinyl)-alpha-D-glucosamine + NADPH + H(+). Its pathway is cell wall biogenesis; peptidoglycan biosynthesis. In terms of biological role, cell wall formation. In Pseudomonas savastanoi pv. phaseolicola (strain 1448A / Race 6) (Pseudomonas syringae pv. phaseolicola (strain 1448A / Race 6)), this protein is UDP-N-acetylenolpyruvoylglucosamine reductase.